The sequence spans 198 residues: Ribonuclease HII (198 aa).

The region spanning 5–195 (LRVAGVDEAG…VKAWLASHQG (191 aa)) is the RNase H type-2 domain. Asp-11, Glu-12, and Asp-103 together coordinate a divalent metal cation.

This sequence belongs to the RNase HII family. Mn(2+) serves as cofactor. It depends on Mg(2+) as a cofactor.

It is found in the cytoplasm. The enzyme catalyses Endonucleolytic cleavage to 5'-phosphomonoester.. Functionally, endonuclease that specifically degrades the RNA of RNA-DNA hybrids. The polypeptide is Ribonuclease HII (Chromobacterium violaceum (strain ATCC 12472 / DSM 30191 / JCM 1249 / CCUG 213 / NBRC 12614 / NCIMB 9131 / NCTC 9757 / MK)).